The chain runs to 192 residues: tRNA (cytidine(56)-2'-O)-methyltransferase (192 aa).

Residues leucine 84 and 112–116 (GGEKV) each bind S-adenosyl-L-methionine.

It belongs to the aTrm56 family. As to quaternary structure, homodimer.

The protein resides in the cytoplasm. The catalysed reaction is cytidine(56) in tRNA + S-adenosyl-L-methionine = 2'-O-methylcytidine(56) in tRNA + S-adenosyl-L-homocysteine + H(+). Specifically catalyzes the AdoMet-dependent 2'-O-ribose methylation of cytidine at position 56 in tRNAs. The sequence is that of tRNA (cytidine(56)-2'-O)-methyltransferase from Halobacterium salinarum (strain ATCC 700922 / JCM 11081 / NRC-1) (Halobacterium halobium).